The sequence spans 289 residues: MLSIFNIWGTFNRVLFFLSLTVSLAGLAGNTLLLWHLGLRIKKGPFNTYLLHLAAADFLFLSCQVGFSIAKIASGYEDTLYFPVTFLWFAVGLWLLAAFIVDCCLSYMFPSFCGPNCRPRYTSFVLCLVIWALTMLAVLLPANACGLLYNRMSLLVCLKYHWVSVVWLGVLASTACGASMFLLVFGNCCSSQPPSKFCKLAQCSGILLFFCRLPLVFYWCLRPVIKFLLPFFFPLATLLACIDSSAKPLLYYLKGRQLRKEPLQVALNRALGEESQSSSGGISLPMSRV.

Over 1-13 (MLSIFNIWGTFNR) the chain is Extracellular. Residues 14 to 34 (VLFFLSLTVSLAGLAGNTLLL) form a helical membrane-spanning segment. At 35–49 (WHLGLRIKKGPFNTY) the chain is on the cytoplasmic side. The helical transmembrane segment at 50–70 (LLHLAAADFLFLSCQVGFSIA) threads the bilayer. At 71-80 (KIASGYEDTL) the chain is on the extracellular side. The chain crosses the membrane as a helical span at residues 81-101 (YFPVTFLWFAVGLWLLAAFIV). The Cytoplasmic segment spans residues 102–123 (DCCLSYMFPSFCGPNCRPRYTS). The chain crosses the membrane as a helical span at residues 124 to 144 (FVLCLVIWALTMLAVLLPANA). Topologically, residues 145–164 (CGLLYNRMSLLVCLKYHWVS) are extracellular. The helical transmembrane segment at 165–185 (VVWLGVLASTACGASMFLLVF) threads the bilayer. The Cytoplasmic portion of the chain corresponds to 186-200 (GNCCSSQPPSKFCKL). A helical membrane pass occupies residues 201–221 (AQCSGILLFFCRLPLVFYWCL). Residue R222 is a topological domain, extracellular. The helical transmembrane segment at 223–243 (PVIKFLLPFFFPLATLLACID) threads the bilayer. The Cytoplasmic segment spans residues 244–289 (SSAKPLLYYLKGRQLRKEPLQVALNRALGEESQSSSGGISLPMSRV).

The protein belongs to the G-protein coupled receptor 1 family. Mas subfamily.

It is found in the cell membrane. In terms of biological role, orphan receptor. May regulate nociceptor function and/or development, including the sensation or modulation of pain. This chain is Mas-related G-protein coupled receptor member G (Mrgprg), found in Rattus norvegicus (Rat).